Reading from the N-terminus, the 100-residue chain is Integration host factor subunit alpha (100 aa).

A disordered region spans residues 53–72 (FDLRDKRQRPGRNPKTGEEI).

It belongs to the bacterial histone-like protein family. In terms of assembly, heterodimer of an alpha and a beta chain.

Its function is as follows. This protein is one of the two subunits of integration host factor, a specific DNA-binding protein that functions in genetic recombination as well as in transcriptional and translational control. In Stutzerimonas stutzeri (strain A1501) (Pseudomonas stutzeri), this protein is Integration host factor subunit alpha.